Here is a 150-residue protein sequence, read N- to C-terminus: SsrA-binding protein (150 aa).

Belongs to the SmpB family.

The protein localises to the cytoplasm. Required for rescue of stalled ribosomes mediated by trans-translation. Binds to transfer-messenger RNA (tmRNA), required for stable association of tmRNA with ribosomes. tmRNA and SmpB together mimic tRNA shape, replacing the anticodon stem-loop with SmpB. tmRNA is encoded by the ssrA gene; the 2 termini fold to resemble tRNA(Ala) and it encodes a 'tag peptide', a short internal open reading frame. During trans-translation Ala-aminoacylated tmRNA acts like a tRNA, entering the A-site of stalled ribosomes, displacing the stalled mRNA. The ribosome then switches to translate the ORF on the tmRNA; the nascent peptide is terminated with the 'tag peptide' encoded by the tmRNA and targeted for degradation. The ribosome is freed to recommence translation, which seems to be the essential function of trans-translation. The protein is SsrA-binding protein of Campylobacter jejuni subsp. jejuni serotype O:6 (strain 81116 / NCTC 11828).